A 1133-amino-acid chain; its full sequence is Nuclear pore complex-interacting protein family member B5 (1133 aa).

Residues W60–V84 form a helical membrane-spanning segment. Disordered stretches follow at residues N241–S262, L290–P575, and E868–S1133. The span at Q252–S262 shows a compositional bias: polar residues. Residues P349–P359 show a composition bias toward pro residues. 7 stretches are compositionally biased toward basic and acidic residues: residues D406–R416, D448–R458, D490–R500, D528–R538, D903–R913, D945–R955, and D987–R997.

The protein belongs to the NPIP family.

The protein resides in the membrane. In Homo sapiens (Human), this protein is Nuclear pore complex-interacting protein family member B5 (NPIPB5).